We begin with the raw amino-acid sequence, 444 residues long: Elongation factor 1-alpha (444 aa).

Residues 15-236 (KPHLNLAVIG…ALDTFQPPPR (222 aa)) enclose the tr-type G domain. The interval 24-31 (GHVDNGKS) is G1. 24 to 31 (GHVDNGKS) serves as a coordination point for GTP. S31 contacts Mg(2+). A G2 region spans residues 80 to 84 (GVTIE). The tract at residues 101–104 (DLPG) is G3. GTP-binding positions include 101 to 105 (DLPGH) and 163 to 166 (NKMD). Positions 163–166 (NKMD) are G4. A G5 region spans residues 202–204 (SAI).

Belongs to the TRAFAC class translation factor GTPase superfamily. Classic translation factor GTPase family. EF-Tu/EF-1A subfamily.

It localises to the cytoplasm. It carries out the reaction GTP + H2O = GDP + phosphate + H(+). Functionally, GTP hydrolase that promotes the GTP-dependent binding of aminoacyl-tRNA to the A-site of ribosomes during protein biosynthesis. In Pyrobaculum islandicum (strain DSM 4184 / JCM 9189 / GEO3), this protein is Elongation factor 1-alpha.